The chain runs to 499 residues: WD repeat-containing protein 55 homolog (499 aa).

Residues 1 to 130 (MHTHNNFKTP…EATFDLDVDD (130 aa)) form a disordered region. 2 stretches are compositionally biased toward acidic residues: residues 12-23 (DEDELDDLDEDM) and 31-48 (IEQEVLNESDSDNDEYDL). Residues 91 to 103 (DDAGGASAGGATS) show a composition bias toward low complexity. Polar residues predominate over residues 113 to 122 (PSGSNRQSEA). 6 WD repeats span residues 154-193 (KLEDFITDICFHPDRDIIALATIIGDVHLYEYDNEANKLL), 198-237 (VHSKACRDVEFTEDGRFLLTCSKDKCVMVTDMETEKLKKL), 241-279 (AHDDAINTLHVLNENLFATGDDAGTVKLWDLRTKNAIFE), 282-321 (ELEDQITQLTTNDQNKLLLATSADGYLTTFNIAARKMYVQ), 324-363 (PYEEELSCMGIYRGDSKLVVGTSKGRLYTYNWGQFGYHCD), and 408-447 (QHNMPIESLDVNSSGELIASSSHNNDVRFWNVKYFEDFGD). Residues 480–499 (TKEDADDDDHDPSAGPSNMA) form a disordered region.

Belongs to the WD repeat WDR55 family.

The chain is WD repeat-containing protein 55 homolog from Drosophila yakuba (Fruit fly).